We begin with the raw amino-acid sequence, 475 residues long: Threonine synthase (475 aa).

Lys120 is modified (N6-(pyridoxal phosphate)lysine).

The protein belongs to the threonine synthase family. Pyridoxal 5'-phosphate serves as cofactor.

It catalyses the reaction O-phospho-L-homoserine + H2O = L-threonine + phosphate. Its pathway is amino-acid biosynthesis; L-threonine biosynthesis; L-threonine from L-aspartate: step 5/5. Its function is as follows. Catalyzes the gamma-elimination of phosphate from L-phosphohomoserine and the beta-addition of water to produce L-threonine. The protein is Threonine synthase (thrC) of Methylobacillus glycogenes.